A 1281-amino-acid chain; its full sequence is Dynactin subunit 1 (1281 aa).

Residues 1 to 25 (MAQSKRHVYSRTPSGSRMSAEASAR) are disordered. Residues 48–90 (GATLFATGKWVGVILDEAKGKNDGTVQGRKYFTCDEGHGIFVR) enclose the CAP-Gly domain. The tract at residues 99 to 225 (DGADTTSPET…EEEGLRAQVR (127 aa)) is disordered. A compositionally biased stretch (polar residues) spans 102–114 (DTTSPETPDSSAS). Thr-108, Thr-145, Thr-146, and Thr-147 each carry phosphothreonine. Positions 129-152 (SKLRGPKPKKAPTARKTTTRRPKP) are enriched in basic residues. Positions 161 to 205 (AGASSSLGPSGSASAGELSSSEPSTPAQTPLAAPIIPTPALTSPG) are enriched in low complexity. Phosphoserine is present on residues Ser-179 and Ser-212. Positions 214-225 (SKEEEGLRAQVR) are enriched in basic and acidic residues. 2 coiled-coil regions span residues 217–540 (EEGL…QQEA) and 952–1043 (IKEL…QSKR). The tract at residues 911–1281 (EYDAERPPSK…LHQLHDRLIS (371 aa)) is interaction with HPS6. The segment at 1065–1084 (GEEQQRGGAPGQAPGIVPGP) is disordered.

This sequence belongs to the dynactin 150 kDa subunit family. Monomer and homodimer. Subunit of dynactin, a multiprotein complex part of a tripartite complex with dynein and a adapter, such as BICDL1, BICD2 or HOOK3. The dynactin complex is built around ACTR1A/ACTB filament and consists of an actin-related filament composed of a shoulder domain, a pointed end and a barbed end. Its length is defined by its flexible shoulder domain. The soulder is composed of 2 DCTN1 subunits, 4 DCTN2 and 2 DCTN3. DCTN1/p150(glued) binds directly to microtubules and to cytoplasmic dynein. The 4 DCNT2 (via N-terminus) bind the ACTR1A filament and act as molecular rulers to determine the length. The pointed end is important for binding dynein-dynactin cargo adapters. Consists of 4 subunits: ACTR10, DCNT4, DCTN5 and DCTN6. The barbed end is composed of a CAPZA1:CAPZB heterodimers, which binds ACTR1A/ACTB filament and dynactin and stabilizes dynactin. Interacts with the C-terminus of MAPRE1, MAPRE2 and MAPRE3. Interacts (via C-terminus) with SNX6. Interacts with CLN3, DYNAP, ECPAS and FBXL5. Interacts with MISP; this interaction regulates its distribution at the cell cortex. Interacts with CEP131. Interacts with CEP126. Interacts with CLIP1. Interacts with dynein intermediate chain and dynein heavy chain. Interacts with PLK1 (via POLO-box domain). Interacts with TBCB. Binds preferentially to tyrosinated microtubules than to detyrosinated microtubules. Interacts with PARD6A. Interacts with HPS6. Interacts with KIF3A. Interacts with BICD2. Interacts with DST (isoform 9). Interacts with DST (isoform 1). Identified in a complex with MREG and RILP. Interacts with BCCIP (isoform 2/alpha). Interacts with DCDC1. Interacts with AKNA. Interacts with DYNC1I2. Interacts with RUFY3 and RUFY4. Post-translationally, ubiquitinated by a SCF complex containing FBXL5, leading to its degradation by the proteasome. Phosphorylation by SLK at Thr-145, Thr-146 and Thr-147 targets DCTN1 to the centrosome. It is uncertain if SLK phosphorylates all three threonines or one or two of them. PLK1-mediated phosphorylation at Ser-179 is essential for its localization in the nuclear envelope, promotes its dissociation from microtubules during early mitosis and positively regulates nuclear envelope breakdown during prophase.

It localises to the cytoplasm. Its subcellular location is the cytoskeleton. The protein resides in the microtubule organizing center. It is found in the centrosome. The protein localises to the centriole. It localises to the spindle. Its subcellular location is the nucleus envelope. The protein resides in the cell cortex. Its function is as follows. Part of the dynactin complex that activates the molecular motor dynein for ultra-processive transport along microtubules. Plays a key role in dynein-mediated retrograde transport of vesicles and organelles along microtubules by recruiting and tethering dynein to microtubules. Binds to both dynein and microtubules providing a link between specific cargos, microtubules and dynein. Essential for targeting dynein to microtubule plus ends, recruiting dynein to membranous cargos and enhancing dynein processivity (the ability to move along a microtubule for a long distance without falling off the track). Can also act as a brake to slow the dynein motor during motility along the microtubule. Can regulate microtubule stability by promoting microtubule formation, nucleation and polymerization and by inhibiting microtubule catastrophe in neurons. Inhibits microtubule catastrophe by binding both to microtubules and to tubulin, leading to enhanced microtubule stability along the axon. Plays a role in metaphase spindle orientation. Plays a role in centriole cohesion and subdistal appendage organization and function. Its recruitment to the centriole in a KIF3A-dependent manner is essential for the maintenance of centriole cohesion and the formation of subdistal appendage. Also required for microtubule anchoring at the mother centriole. Plays a role in primary cilia formation. The protein is Dynactin subunit 1 (DCTN1) of Sus scrofa (Pig).